Here is a 96-residue protein sequence, read N- to C-terminus: Large ribosomal subunit protein uL23cz (96 aa).

This sequence belongs to the universal ribosomal protein uL23 family. As to quaternary structure, part of the 50S ribosomal subunit.

It is found in the plastid. The protein resides in the chloroplast. In terms of biological role, binds to 23S rRNA. In Sorghum bicolor (Sorghum), this protein is Large ribosomal subunit protein uL23cz (rpl23-A).